A 173-amino-acid chain; its full sequence is NADH-ubiquinone oxidoreductase chain 6 (173 aa).

Helical transmembrane passes span 1-21 (MTYI…AVAS), 27-47 (FAAL…VGYG), 53-73 (LVLF…SAAL), 86-106 (SVLG…GWFW), and 139-159 (YGGG…FVVL).

Belongs to the complex I subunit 6 family.

The protein localises to the mitochondrion membrane. The catalysed reaction is a ubiquinone + NADH + 5 H(+)(in) = a ubiquinol + NAD(+) + 4 H(+)(out). In terms of biological role, core subunit of the mitochondrial membrane respiratory chain NADH dehydrogenase (Complex I) that is believed to belong to the minimal assembly required for catalysis. Complex I functions in the transfer of electrons from NADH to the respiratory chain. The immediate electron acceptor for the enzyme is believed to be ubiquinone. In Salmo salar (Atlantic salmon), this protein is NADH-ubiquinone oxidoreductase chain 6 (MT-ND6).